Consider the following 292-residue polypeptide: Shikimate dehydrogenase (NADP(+)) (292 aa).

Shikimate is bound by residues 25 to 27 (SKS) and threonine 72. The active-site Proton acceptor is the lysine 76. Shikimate contacts are provided by asparagine 97 and aspartate 113. Residues 137–141 (GAGGA), 161–166 (NRTQSK), and methionine 230 each bind NADP(+). Residue tyrosine 232 participates in shikimate binding. Glycine 254 contributes to the NADP(+) binding site.

This sequence belongs to the shikimate dehydrogenase family. Homodimer.

It carries out the reaction shikimate + NADP(+) = 3-dehydroshikimate + NADPH + H(+). The protein operates within metabolic intermediate biosynthesis; chorismate biosynthesis; chorismate from D-erythrose 4-phosphate and phosphoenolpyruvate: step 4/7. Involved in the biosynthesis of the chorismate, which leads to the biosynthesis of aromatic amino acids. Catalyzes the reversible NADPH linked reduction of 3-dehydroshikimate (DHSA) to yield shikimate (SA). This Shewanella sp. (strain MR-4) protein is Shikimate dehydrogenase (NADP(+)).